The primary structure comprises 915 residues: Isoleucine--tRNA ligase (915 aa).

A 'HIGH' region motif is present at residues 58 to 68 (PYANGHLHIGH). Residue Glu-568 coordinates L-isoleucyl-5'-AMP. A 'KMSKS' region motif is present at residues 609–613 (KMSKS). Lys-612 contacts ATP. Residues Cys-892, Cys-895, Cys-907, and Cys-910 each contribute to the Zn(2+) site.

It belongs to the class-I aminoacyl-tRNA synthetase family. IleS type 1 subfamily. In terms of assembly, monomer. Zn(2+) serves as cofactor.

Its subcellular location is the cytoplasm. It carries out the reaction tRNA(Ile) + L-isoleucine + ATP = L-isoleucyl-tRNA(Ile) + AMP + diphosphate. Catalyzes the attachment of isoleucine to tRNA(Ile). As IleRS can inadvertently accommodate and process structurally similar amino acids such as valine, to avoid such errors it has two additional distinct tRNA(Ile)-dependent editing activities. One activity is designated as 'pretransfer' editing and involves the hydrolysis of activated Val-AMP. The other activity is designated 'posttransfer' editing and involves deacylation of mischarged Val-tRNA(Ile). In Wolinella succinogenes (strain ATCC 29543 / DSM 1740 / CCUG 13145 / JCM 31913 / LMG 7466 / NCTC 11488 / FDC 602W) (Vibrio succinogenes), this protein is Isoleucine--tRNA ligase.